We begin with the raw amino-acid sequence, 151 residues long: Transcriptional regulator MraZ (151 aa).

SpoVT-AbrB domains lie at 5–52 (ANAV…PLDE) and 81–124 (AVDL…DEDA).

Belongs to the MraZ family. Forms oligomers.

The protein localises to the cytoplasm. Its subcellular location is the nucleoid. The chain is Transcriptional regulator MraZ from Pseudomonas putida (strain ATCC 700007 / DSM 6899 / JCM 31910 / BCRC 17059 / LMG 24140 / F1).